The primary structure comprises 138 residues: 18 kDa antigen 2 (138 aa).

The 111-residue stretch at 21 to 131 (GTRRPAVMPM…KPRRIEINHN (111 aa)) folds into the sHSP domain.

It belongs to the small heat shock protein (HSP20) family.

In terms of biological role, not known. This protein is one of the major immune reactive proteins in mycobacteria. This is 18 kDa antigen 2 from Mycobacterium avium.